Here is a 145-residue protein sequence, read N- to C-terminus: Bacilliredoxin BLi02578/BL01507 (145 aa).

The protein belongs to the bacilliredoxin family.

This Bacillus licheniformis (strain ATCC 14580 / DSM 13 / JCM 2505 / CCUG 7422 / NBRC 12200 / NCIMB 9375 / NCTC 10341 / NRRL NRS-1264 / Gibson 46) protein is Bacilliredoxin BLi02578/BL01507.